A 1873-amino-acid polypeptide reads, in one-letter code: Girdin (1873 aa).

Residues 12–132 (QFMTSPLVTW…KLLLLLLGCA (121 aa)) form the Calponin-homology (CH) domain. The stretch at 196 to 425 (HLRRLIDERD…EMAQKQSMDE (230 aa)) forms a coiled coil. 3 positions are modified to phosphoserine: S233, S237, and S449. 2 coiled-coil regions span residues 458-1232 (TSSK…ESKN) and 1268-1385 (HKNL…KFYD). 2 disordered regions span residues 816–841 (ENKS…NKRL) and 1013–1034 (EERM…GRES). At S1020 the chain carries Phosphoserine. S1387 is modified (phosphoserine). The segment at 1390 to 1408 (RRRGNWITLKMRKLIKSKK) is phosphoinositide-binding. Basic and acidic residues predominate over residues 1407 to 1416 (KKDINRERQK). Disordered stretches follow at residues 1407-1459 (KKDI…LGTK), 1560-1602 (TTSF…SNNN), and 1616-1643 (QSRP…GSSP). S1417 carries the phosphoserine; by PKB/AKT1 modification. Composition is skewed to polar residues over residues 1417–1430 (SLTL…SSEG), 1445–1459 (VGSN…LGTK), 1560–1579 (TTSF…STGS), and 1616–1626 (QSRPQSHSSGD). At T1421 the chain carries Phosphothreonine. Residues 1674–1704 (KAGSPGSEVVTLQQFLEESNKLTSIQLKSSS) carry the GBA motif. Residues S1677, S1692, and S1719 each carry the phosphoserine modification. The tract at residues 1715–1825 (SLSVSSDFLG…GTTRRTSIHD (111 aa)) is SH2-like; required for interaction with growth factor receptors. Positions 1738-1873 (SGKTPGDFYD…KSRSREQQSS (136 aa)) are disordered. Residues 1745–1755 (FYDRRTTKPEF) are compositionally biased toward basic and acidic residues. A Phosphotyrosine modification is found at Y1767. 3 stretches are compositionally biased toward polar residues: residues 1768–1781 (TISS…STQG), 1789–1801 (TSVS…SNPY), and 1809–1820 (SVISTAEGTTRR). A Phosphotyrosine modification is found at Y1801. 2 positions are modified to phosphoserine: S1822 and S1839. Residues 1822–1832 (SIHDFLSKDSR) are compositionally biased toward basic and acidic residues. The span at 1839 to 1852 (SSPPTAGSSSTTAS) shows a compositional bias: low complexity. A compositionally biased stretch (basic and acidic residues) spans 1858–1873 (QESRNSKSRSREQQSS).

This sequence belongs to the CCDC88 family. Homodimer. Interacts (via GBA motif) with guanine nucleotide-binding protein G(i) alpha subunits GNAI1, GNAI2 and GNAI3. Also interacts (via GNA motif) with guanine nucleotide-binding protein G(s) alpha subunit GNAS. Interaction with G(i) alpha subunits occurs before interaction with GNAS and is regulated by phosphorylation; phosphorylation at Ser-1677 enhances binding to G(i) alpha subunits while phosphorylation at Ser-1692 abolishes G(i) alpha subunit binding, promoting binding to GNAS. Interacts (via C-terminal SH2-like region) with growth factor receptors EGFR, INSR and KDR/VEGFR2 (via their autophosphorylated cytoplasmic tails). Forms a complex with EGFR and GNAI3 which leads to enhanced EGFR signaling and triggering of cell migration; ligand stimulation is required for recruitment of GNAI3 to the complex. Interacts (tyrosine-phosphorylated form) with phosphatidylinositol 3-kinase (PI3K) regulatory subunit PIK3R1/p85a (via SH2 domains); the interaction enables recruitment of PIK3R1 to the EGFR receptor, enhancing PI3K activity and cell migration. Interacts with serine/threonine-protein kinase PRKCQ; the interaction leads to phosphorylation of CCDC88A and inhibition of its guanine nucleotide exchange factor activity. Interacts (via C-terminus) with DISC1; the interaction is direct. Interacts with AKT proteins; the interaction is inhibited in the presence of DISC1. Interacts with AKT1/PKB (via C-terminus). The non-phosphorylated form interacts with phosphatidylinositol 4-phosphate [Pi(4)P] and weakly with phosphatidylinositol 3-phosphate [Pi(3)P]. Interacts with microtubules. Interacts with actin. Phosphorylation is induced by epidermal growth factor (EGF) in a phosphoinositide 3-kinase (PI3K)-dependent manner. Phosphorylation by AKT1/PKB is necessary for the delocalization from the cell membrane and for cell migration. Phosphorylated on tyrosine residues which promotes binding to phosphatidylinositol 3-kinase (PI3K) regulatory subunit PIK3R1/p85a and enhances PI3K activity. Tyrosine-phosphorylated by both receptor and non-receptor tyrosine kinases in vitro. Tyrosine phosphorylation is required for AKT1-dependent phosphorylation of Ser-1417. Phosphorylation at Ser-1692 by PRKCQ disrupts interaction with GNAI3 and inhibits guanine nucleotide exchange factor activity. Expressed in the dentate gyrus, pyramidal cell layer of hippocampal regions CA1 and CA3 at postnatal 15. Expressed highly in neurons. Weakly in neuron progenitors (at protein level). Expressed in the dentate granule cell layer of the hippocampus. Expressed highly in the adult testis, moderately in the brain and at a low level in the spleen, lungs and fat.

Its subcellular location is the cell membrane. It localises to the cytoplasm. The protein localises to the cytosol. The protein resides in the cytoplasmic vesicle. It is found in the cell projection. Its subcellular location is the lamellipodium. It localises to the cytoskeleton. The protein localises to the cilium basal body. The protein resides in the microtubule organizing center. It is found in the centrosome. Its subcellular location is the centriole. In terms of biological role, bifunctional modulator of guanine nucleotide-binding proteins (G proteins). Acts as a non-receptor guanine nucleotide exchange factor which binds to and activates guanine nucleotide-binding protein G(i) alpha subunits. Also acts as a guanine nucleotide dissociation inhibitor for guanine nucleotide-binding protein G(s) subunit alpha GNAS. Essential for cell migration. Interacts in complex with G(i) alpha subunits with the EGFR receptor, retaining EGFR at the cell membrane following ligand stimulation and promoting EGFR signaling which triggers cell migration. Binding to Gi-alpha subunits displaces the beta and gamma subunits from the heterotrimeric G-protein complex which enhances phosphoinositide 3-kinase (PI3K)-dependent phosphorylation and kinase activity of AKT1/PKB. Phosphorylation of AKT1/PKB induces the phosphorylation of downstream effectors GSK3 and FOXO1/FKHR, and regulates DNA replication and cell proliferation. Binds in its tyrosine-phosphorylated form to the phosphatidylinositol 3-kinase (PI3K) regulatory subunit PIK3R1 which enables recruitment of PIK3R1 to the EGFR receptor, enhancing PI3K activity and cell migration. Plays a role as a key modulator of the AKT-mTOR signaling pathway, controlling the tempo of the process of newborn neuron integration during adult neurogenesis, including correct neuron positioning, dendritic development and synapse formation. Inhibition of G(s) subunit alpha GNAS leads to reduced cellular levels of cAMP and suppression of cell proliferation. Essential for the integrity of the actin cytoskeleton. Required for formation of actin stress fibers and lamellipodia. May be involved in membrane sorting in the early endosome. Plays a role in ciliogenesis and cilium morphology and positioning and this may partly be through regulation of the localization of scaffolding protein CROCC/Rootletin. This Mus musculus (Mouse) protein is Girdin (Ccdc88a).